Here is a 306-residue protein sequence, read N- to C-terminus: N-acetylmuramic acid 6-phosphate etherase (306 aa).

The 164-residue stretch at isoleucine 59–lysine 222 folds into the SIS domain. Glutamate 87 functions as the Proton donor in the catalytic mechanism. The active site involves glutamate 118.

It belongs to the GCKR-like family. MurNAc-6-P etherase subfamily. Homodimer.

It carries out the reaction N-acetyl-D-muramate 6-phosphate + H2O = N-acetyl-D-glucosamine 6-phosphate + (R)-lactate. It functions in the pathway amino-sugar metabolism; N-acetylmuramate degradation. Functionally, specifically catalyzes the cleavage of the D-lactyl ether substituent of MurNAc 6-phosphate, producing GlcNAc 6-phosphate and D-lactate. The chain is N-acetylmuramic acid 6-phosphate etherase from Gloeothece citriformis (strain PCC 7424) (Cyanothece sp. (strain PCC 7424)).